We begin with the raw amino-acid sequence, 347 residues long: 3-isopropylmalate dehydrogenase (347 aa).

Residues Arg-87, Arg-97, Arg-121, and Asp-212 each coordinate substrate. Mg(2+)-binding residues include Asp-212, Asp-236, and Asp-240. Gly-272–Asp-284 is a binding site for NAD(+).

Belongs to the isocitrate and isopropylmalate dehydrogenases family. LeuB type 2 subfamily. As to quaternary structure, homodimer. Mg(2+) serves as cofactor. Requires Mn(2+) as cofactor.

Its subcellular location is the cytoplasm. The catalysed reaction is (2R,3S)-3-isopropylmalate + NAD(+) = 4-methyl-2-oxopentanoate + CO2 + NADH. Its pathway is amino-acid biosynthesis; L-leucine biosynthesis; L-leucine from 3-methyl-2-oxobutanoate: step 3/4. Catalyzes the oxidation of 3-carboxy-2-hydroxy-4-methylpentanoate (3-isopropylmalate) to 3-carboxy-4-methyl-2-oxopentanoate. The product decarboxylates to 4-methyl-2 oxopentanoate. The protein is 3-isopropylmalate dehydrogenase of Saccharopolyspora erythraea (strain ATCC 11635 / DSM 40517 / JCM 4748 / NBRC 13426 / NCIMB 8594 / NRRL 2338).